We begin with the raw amino-acid sequence, 635 residues long: DNA mismatch repair protein MutL (635 aa).

This sequence belongs to the DNA mismatch repair MutL/HexB family.

Its function is as follows. This protein is involved in the repair of mismatches in DNA. It is required for dam-dependent methyl-directed DNA mismatch repair. May act as a 'molecular matchmaker', a protein that promotes the formation of a stable complex between two or more DNA-binding proteins in an ATP-dependent manner without itself being part of a final effector complex. In Yersinia pestis bv. Antiqua (strain Angola), this protein is DNA mismatch repair protein MutL.